A 662-amino-acid polypeptide reads, in one-letter code: Polyunsaturated fatty acid (12S)/(13S)-lipoxygenase, epidermal-type (662 aa).

Residues 2–114 (GKYKILVVTG…TIYLPEGTAL (113 aa)) form the PLAT domain. The Lipoxygenase domain maps to 114-662 (LKVNDDTKNL…PSMVENSVTI (549 aa)). Fe cation contacts are provided by His360, His365, His540, His544, and Ile662.

This sequence belongs to the lipoxygenase family. It depends on Fe cation as a cofactor.

It localises to the cytoplasm. The enzyme catalyses (5Z,8Z,11Z,14Z)-eicosatetraenoate + O2 = (12S)-hydroperoxy-(5Z,8Z,10E,14Z)-eicosatetraenoate. The catalysed reaction is 1-O-methyl-(9Z,12Z)-octadecadienoate + O2 = 1-O-methyl-(13S)-hydroperoxy-(9Z,11E)-octadecadienoate. It carries out the reaction (8Z,11Z,14Z)-eicosatrienoate + O2 = (12S)-hydroperoxy-(8Z,10E,14Z)-eicosatrienoate. It catalyses the reaction (5Z,8Z,11Z)-eicosatrienoate + O2 = (12S)-hydroperoxy-(5Z,8Z,10E)-eicosatrienoate. The enzyme catalyses 1-O-methyl-(5Z,8Z,11Z,14Z)-eicosatetraenoate + O2 = 1-O-methyl-(12S)-hydroperoxy-(5Z,8Z,10E,14Z)-eicosatetraenoate. The catalysed reaction is (9Z,12Z)-octadecadienoate + O2 = (13S)-hydroperoxy-(9Z,11E)-octadecadienoate. It carries out the reaction (4Z,7Z,10Z,13Z,16Z,19Z)-docosahexaenoate + O2 = (14S)-hydroperoxy-(4Z,7Z,10Z,12E,16Z,19Z)-docosahexaenoate. The protein operates within lipid metabolism; hydroperoxy eicosatetraenoic acid biosynthesis. Arachidonate 12-lipoxygenase activity is decreased when the pH decreases from 7.4 to 6.0. Functionally, catalyzes the regio and stereo-specific incorporation of a single molecule of dioxygen into free and esterified polyunsaturated fatty acids generating lipid hydroperoxides that can be further reduced to the corresponding hydroxy species. Shows increasing catalytic activity within the series arachidonic acid &lt; 5,8,11-eicosatrienoic acid &lt; linoleic acid &lt; 8,11,14-eicosatrienoic acid. In Rattus norvegicus (Rat), this protein is Polyunsaturated fatty acid (12S)/(13S)-lipoxygenase, epidermal-type.